Reading from the N-terminus, the 270-residue chain is Phosphonoacetaldehyde hydrolase (270 aa).

Aspartate 11 (nucleophile) is an active-site residue. Positions 11 and 13 each coordinate Mg(2+). Lysine 53 (schiff-base intermediate with substrate) is an active-site residue. Aspartate 187 contacts Mg(2+).

Belongs to the HAD-like hydrolase superfamily. PhnX family. Homodimer. The cofactor is Mg(2+).

It carries out the reaction phosphonoacetaldehyde + H2O = acetaldehyde + phosphate + H(+). Involved in phosphonate degradation. The protein is Phosphonoacetaldehyde hydrolase of Salmonella gallinarum (strain 287/91 / NCTC 13346).